A 419-amino-acid chain; its full sequence is Serine/threonine-protein kinase Kist (419 aa).

The Protein kinase domain maps to 23–303; that stretch reads WQVQSRLGSG…PAEMALCSPF (281 aa). Residues 29–37 and K54 contribute to the ATP site; that span reads LGSGSSASV. D158 (proton acceptor) is an active-site residue. An RRM domain is found at 323-405; that stretch reads LRLLNVLDDD…GKFVVATFYP (83 aa).

It belongs to the protein kinase superfamily. Ser/Thr protein kinase family. As to quaternary structure, interacts with PAM and CDKN1B/p27Kip1. Interacts with stathmin.

It localises to the nucleus. It carries out the reaction L-seryl-[protein] + ATP = O-phospho-L-seryl-[protein] + ADP + H(+). The catalysed reaction is L-threonyl-[protein] + ATP = O-phospho-L-threonyl-[protein] + ADP + H(+). Functionally, upon serum stimulation, phosphorylates CDKN1B/p27Kip1, thus controlling CDKN1B subcellular location and cell cycle progression in G1 phase. May be involved in trafficking and/or processing of RNA. The chain is Serine/threonine-protein kinase Kist (Uhmk1) from Mus musculus (Mouse).